The primary structure comprises 134 residues: Cytochrome b5 (134 aa).

Residues 6 to 82 (VKYFTRAEVA…MKQYKVGELV (77 aa)) form the Cytochrome b5 heme-binding domain. Heme contacts are provided by His-41 and His-65. The chain crosses the membrane as a helical span at residues 111-131 (WLMPFVLGLVATLIYKFFFGT).

It belongs to the cytochrome b5 family.

It is found in the endoplasmic reticulum membrane. The protein resides in the microsome membrane. Its function is as follows. Cytochrome b5 is a membrane bound hemoprotein which function as an electron carrier for several membrane bound oxygenases. The polypeptide is Cytochrome b5 (Cyt-b5) (Musca domestica (House fly)).